Reading from the N-terminus, the 309-residue chain is Protein FdhE homolog (309 aa).

It belongs to the FdhE family.

Its subcellular location is the cytoplasm. Functionally, necessary for formate dehydrogenase activity. The protein is Protein FdhE homolog of Enterobacter sp. (strain 638).